Here is a 510-residue protein sequence, read N- to C-terminus: Metalloprotease TIKI homolog (510 aa).

The first 30 residues, 1–30 (MQVKIVQVFPCLVLLVKLVLLSVLLPSATG), serve as a signal peptide directing secretion. Residues 31-489 (SYHCSNNATQ…FIPSASSGLR (459 aa)) lie on the Extracellular side of the membrane. N37, N98, N108, N141, N223, N281, N322, N383, and N417 each carry an N-linked (GlcNAc...) asparagine glycan. Over residues 435–471 (TSLNSATASTTVATPTSSVTPPTSSSSQTRSLTISDS) the composition is skewed to low complexity. The interval 435–477 (TSLNSATASTTVATPTSSVTPPTSSSSQTRSLTISDSQRTSDD) is disordered. Residues 490–510 (YNIGLVCVTLFFVLLIITSAL) form a helical membrane-spanning segment.

It belongs to the TIKI family. It depends on Mn(2+) as a cofactor. Co(2+) is required as a cofactor.

Its subcellular location is the membrane. Functionally, metalloprotease. The polypeptide is Metalloprotease TIKI homolog (Amphimedon queenslandica (Sponge)).